Consider the following 100-residue polypeptide: Large ribosomal subunit protein uL23 (100 aa).

This sequence belongs to the universal ribosomal protein uL23 family. Part of the 50S ribosomal subunit. Contacts protein L29, and trigger factor when it is bound to the ribosome.

Its function is as follows. One of the early assembly proteins it binds 23S rRNA. One of the proteins that surrounds the polypeptide exit tunnel on the outside of the ribosome. Forms the main docking site for trigger factor binding to the ribosome. The protein is Large ribosomal subunit protein uL23 of Aliivibrio fischeri (strain MJ11) (Vibrio fischeri).